A 371-amino-acid chain; its full sequence is Histidinol-phosphate aminotransferase (371 aa).

Position 228 is an N6-(pyridoxal phosphate)lysine (Lys228).

The protein belongs to the class-II pyridoxal-phosphate-dependent aminotransferase family. Histidinol-phosphate aminotransferase subfamily. It depends on pyridoxal 5'-phosphate as a cofactor.

It catalyses the reaction L-histidinol phosphate + 2-oxoglutarate = 3-(imidazol-4-yl)-2-oxopropyl phosphate + L-glutamate. It participates in amino-acid biosynthesis; L-histidine biosynthesis; L-histidine from 5-phospho-alpha-D-ribose 1-diphosphate: step 7/9. The sequence is that of Histidinol-phosphate aminotransferase from Methanococcus maripaludis (strain C6 / ATCC BAA-1332).